Reading from the N-terminus, the 34-residue chain is Photosystem II reaction center protein M (34 aa).

The chain crosses the membrane as a helical span at residues 5-25 (ILAFIATALFISIPTAFLLIP).

It belongs to the PsbM family. In terms of assembly, PSII is composed of 1 copy each of membrane proteins PsbA, PsbB, PsbC, PsbD, PsbE, PsbF, PsbH, PsbI, PsbJ, PsbK, PsbL, PsbM, PsbT, PsbX, PsbY, PsbZ, Psb30/Ycf12, at least 3 peripheral proteins of the oxygen-evolving complex and a large number of cofactors. It forms dimeric complexes.

It localises to the plastid. Its subcellular location is the chloroplast thylakoid membrane. Its function is as follows. One of the components of the core complex of photosystem II (PSII). PSII is a light-driven water:plastoquinone oxidoreductase that uses light energy to abstract electrons from H(2)O, generating O(2) and a proton gradient subsequently used for ATP formation. It consists of a core antenna complex that captures photons, and an electron transfer chain that converts photonic excitation into a charge separation. This subunit is found at the monomer-monomer interface. This Psilotum nudum (Whisk fern) protein is Photosystem II reaction center protein M.